Reading from the N-terminus, the 126-residue chain is Fluoride-specific ion channel FluC (126 aa).

Helical transmembrane passes span 7–24 (LWVSLGGIVGACARYFLS), 35–55 (FPWGTLLINITGSFVLGLFLV), 69–89 (LLIAIGFCGAYTTFSSYAYES), and 98–118 (WGLFAGNVLANNILCLAAVLG). Na(+)-binding residues include glycine 77 and threonine 80.

Belongs to the fluoride channel Fluc/FEX (TC 1.A.43) family.

The protein localises to the cell inner membrane. The catalysed reaction is fluoride(in) = fluoride(out). Its activity is regulated as follows. Na(+) is not transported, but it plays an essential structural role and its presence is essential for fluoride channel function. Its function is as follows. Fluoride-specific ion channel. Important for reducing fluoride concentration in the cell, thus reducing its toxicity. This is Fluoride-specific ion channel FluC from Koribacter versatilis (strain Ellin345).